The following is a 155-amino-acid chain: Class I hydrophobin C (155 aa).

Positions 1–22 (MLVTMRLSRSIAVFTLVTYATG) are cleaved as a signal peptide. Disulfide bonds link cysteine 52/cysteine 129, cysteine 60/cysteine 123, cysteine 61/cysteine 101, and cysteine 130/cysteine 148.

The protein belongs to the fungal hydrophobin family. Self-assembles to form functional amyloid fibrils called rodlets. Self-assembly into fibrillar rodlets occurs spontaneously at hydrophobic:hydrophilic interfaces and the rodlets further associate laterally to form amphipathic monolayers.

Its subcellular location is the secreted. The protein resides in the spore wall. Aerial growth, conidiation, and dispersal of filamentous fungi in the environment rely upon a capability of their secreting small amphipathic proteins called hydrophobins (HPBs) with low sequence identity. Class I can self-assemble into an outermost layer of rodlet bundles on aerial cell surfaces, conferring cellular hydrophobicity that supports fungal growth, development and dispersal; whereas Class II form highly ordered films at water-air interfaces through intermolecular interactions but contribute nothing to the rodlet structure. RodC is a class I hydrophobin that, unlike rodA, is not required for rodlet formation. The sequence is that of Class I hydrophobin C from Aspergillus fumigatus (strain ATCC MYA-4609 / CBS 101355 / FGSC A1100 / Af293) (Neosartorya fumigata).